The primary structure comprises 209 residues: Ribose 1,5-bisphosphate phosphokinase PhnN (209 aa).

27 to 34 (GPSGGGKD) provides a ligand contact to ATP.

This sequence belongs to the ribose 1,5-bisphosphokinase family.

The catalysed reaction is alpha-D-ribose 1,5-bisphosphate + ATP = 5-phospho-alpha-D-ribose 1-diphosphate + ADP. It participates in metabolic intermediate biosynthesis; 5-phospho-alpha-D-ribose 1-diphosphate biosynthesis; 5-phospho-alpha-D-ribose 1-diphosphate from D-ribose 5-phosphate (route II): step 3/3. In terms of biological role, catalyzes the phosphorylation of ribose 1,5-bisphosphate to 5-phospho-D-ribosyl alpha-1-diphosphate (PRPP). This chain is Ribose 1,5-bisphosphate phosphokinase PhnN, found in Chelativorans sp. (strain BNC1).